A 557-amino-acid chain; its full sequence is Protein NRT1/ PTR FAMILY 2.6 (557 aa).

The next 12 helical transmembrane spans lie at 26-46 (ITFP…LGWL), 67-87 (ILNI…IAAD), 89-109 (FFGT…GVVL), 136-156 (NIQL…AGGL), 177-197 (FFNW…TAIV), 203-223 (ISWS…LIVF), 318-338 (IIPL…QLGL), 356-376 (IPAG…IIVN), 398-418 (VGIG…VEAK), 439-459 (VLWL…HFPG), 478-498 (SITS…IDLI), and 518-538 (YWIL…CSWF).

This sequence belongs to the major facilitator superfamily. Proton-dependent oligopeptide transporter (POT/PTR) (TC 2.A.17) family. As to expression, expressed in roots.

The protein resides in the membrane. In terms of biological role, transporter involved in a passive nitrate efflux. The protein is Protein NRT1/ PTR FAMILY 2.6 (NPF2.6) of Arabidopsis thaliana (Mouse-ear cress).